Here is a 342-residue protein sequence, read N- to C-terminus: S-adenosylmethionine:tRNA ribosyltransferase-isomerase (342 aa).

Belongs to the QueA family. In terms of assembly, monomer.

The protein resides in the cytoplasm. The enzyme catalyses 7-aminomethyl-7-carbaguanosine(34) in tRNA + S-adenosyl-L-methionine = epoxyqueuosine(34) in tRNA + adenine + L-methionine + 2 H(+). Its pathway is tRNA modification; tRNA-queuosine biosynthesis. Transfers and isomerizes the ribose moiety from AdoMet to the 7-aminomethyl group of 7-deazaguanine (preQ1-tRNA) to give epoxyqueuosine (oQ-tRNA). The polypeptide is S-adenosylmethionine:tRNA ribosyltransferase-isomerase (Novosphingobium aromaticivorans (strain ATCC 700278 / DSM 12444 / CCUG 56034 / CIP 105152 / NBRC 16084 / F199)).